A 152-amino-acid chain; its full sequence is Protein FERTILITY RESTORER RF2, mitochondrial (152 aa).

A mitochondrion-targeting transit peptide spans 1 to 52 (MSTLVTCSLPGAVTTHASTRRFGGSQFQTSQASCISFKREVSAKAVLRSVRC). Residues 52–69 (CNATQTQSAQRKSSTATV) show a composition bias toward polar residues. The segment at 52-101 (CNATQTQSAQRKSSTATVKRSDPKGKTQGPKLDDGSGGFPPFRFGKGGGG) is disordered.

It localises to the mitochondrion. In terms of biological role, non-functional allele of the RF2 fertility restorer of rice varieties with LD-type cytoplasmic male sterility (CMS). Non-functional RF2 alleles are found in japonica cultivars Taichung 65 and Nipponbare (AC F1SZ44), and is due to the presence of Thr-78 which replaces Ile-78 in the functional allele. Functional allele is found in the japonica cultivars Fukuyama and Owarihatamochi (AC F1SZ42), and indica cultivar Kasalath (AC F1SZ41). The sequence is that of Protein FERTILITY RESTORER RF2, mitochondrial from Oryza sativa subsp. japonica (Rice).